Consider the following 530-residue polypeptide: UDP-glucuronosyltransferase 2B17 (530 aa).

Residues 1–23 (MPGKWISALLLLQISCCFRSVKC) form the signal peptide. N316 and N483 each carry an N-linked (GlcNAc...) asparagine glycan. The helical transmembrane segment at 494–510 (VIGFLLSCVATTIVLSV) threads the bilayer.

Belongs to the UDP-glycosyltransferase family.

The protein localises to the endoplasmic reticulum membrane. The catalysed reaction is glucuronate acceptor + UDP-alpha-D-glucuronate = acceptor beta-D-glucuronoside + UDP + H(+). It catalyses the reaction 17alpha-estradiol + UDP-alpha-D-glucuronate = 17alpha-estradiol 3-O-(beta-D-glucuronate) + UDP + H(+). The enzyme catalyses 17alpha-estradiol + UDP-alpha-D-glucuronate = 17alpha-estradiol 17-O-(beta-D-glucuronate) + UDP + H(+). It carries out the reaction 17beta-estradiol + UDP-alpha-D-glucuronate = 17beta-estradiol 17-O-(beta-D-glucuronate) + UDP + H(+). The catalysed reaction is 17beta-hydroxy-5alpha-androstan-3-one + UDP-alpha-D-glucuronate = 5alpha-dihydrotestosterone 17-O-(beta-D-glucuronate) + UDP + H(+). It catalyses the reaction testosterone + UDP-alpha-D-glucuronate = testosterone 17-O-(beta-D-glucuronate) + UDP + H(+). UDP-glucuronosyltransferase (UGT) that catalyzes phase II biotransformation reactions in which lipophilic substrates are conjugated with glucuronic acid to increase the metabolite's water solubility, thereby facilitating excretion into either the urine or bile. Catalyzes the glucuronidation of endogenous steroid hormones such as androgens (epitestosterone, androsterone) and estrogens (estradiol, epiestradiol). This Mus musculus (Mouse) protein is UDP-glucuronosyltransferase 2B17.